A 170-amino-acid chain; its full sequence is Probable chemoreceptor glutamine deamidase CheD 3 (170 aa).

It belongs to the CheD family.

It carries out the reaction L-glutaminyl-[protein] + H2O = L-glutamyl-[protein] + NH4(+). Functionally, probably deamidates glutamine residues to glutamate on methyl-accepting chemotaxis receptors (MCPs), playing an important role in chemotaxis. This is Probable chemoreceptor glutamine deamidase CheD 3 from Dechloromonas aromatica (strain RCB).